We begin with the raw amino-acid sequence, 182 residues long: UPF0397 protein SPP_0507 (182 aa).

Transmembrane regions (helical) follow at residues 10–30 (VVAV…NIPT), 46–66 (LLSI…GHAI), 73–93 (YGLW…VGLF), 109–129 (ILIF…VLAP), and 148–168 (IVAG…LLLA).

It belongs to the UPF0397 family.

The protein localises to the cell membrane. This Streptococcus pneumoniae (strain P1031) protein is UPF0397 protein SPP_0507.